Reading from the N-terminus, the 381-residue chain is Ecotin-like protein 3 (381 aa).

Residues 232 to 381 are disordered; sequence EHLEVCPKNN…GSKADPVDGK (150 aa). The span at 273–292 shows a compositional bias: polar residues; the sequence is NESSPSRPRLSSTAYWPQEN. Positions 336–347 are enriched in basic and acidic residues; the sequence is RKAEDDVYEKTM. Residues 363 to 372 are compositionally biased toward polar residues; the sequence is SASSTKSGNG.

It belongs to the protease inhibitor I11 (ecotin) family.

The polypeptide is Ecotin-like protein 3 (Leishmania major).